The sequence spans 23 residues: Magainin-R1 (23 aa).

In terms of tissue distribution, expressed by the skin glands.

It is found in the secreted. Antimicrobial peptide. The sequence is that of Magainin-R1 from Xenopus ruwenzoriensis (Uganda clawed frog).